Consider the following 287-residue polypeptide: Probable glucose uptake protein GlcU (287 aa).

A run of 9 helical transmembrane segments spans residues 7-29 (LIAL…VGGG), 34-56 (IRGT…FAKF), 58-75 (NPTV…WAFG), 114-136 (WSSM…GVAL), 156-178 (MGIL…IFGV), 183-202 (ALFF…SMNH), 209-228 (TALN…FMFY), 233-255 (VGVA…GGIF), and 267-286 (TGIW…LGNL).

Belongs to the GRP transporter (TC 2.A.7.5) family.

The protein localises to the cell membrane. Its function is as follows. Involved in the uptake of glucose. This chain is Probable glucose uptake protein GlcU (glcU), found in Staphylococcus aureus (strain COL).